The chain runs to 422 residues: Interferon-induced protein 44 (422 aa).

The region spanning 1-147 (MAMRTRLTWQ…IQECEAFRCE (147 aa)) is the TLDc domain.

The protein belongs to the IFI44 family.

Its subcellular location is the cytoplasm. Its function is as follows. This protein aggregates to form microtubular structures. This is Interferon-induced protein 44 (Ifi44) from Mus musculus (Mouse).